Here is a 1123-residue protein sequence, read N- to C-terminus: Probable serine/threonine-protein kinase nek3 (1123 aa).

The 261-residue stretch at 4-264 (YEEIKTIGKG…VNDILELPFI (261 aa)) folds into the Protein kinase domain. ATP-binding positions include 10–18 (IGKGSFGRA) and Lys-33. Asp-130 functions as the Proton acceptor in the catalytic mechanism. Low complexity-rich tracts occupy residues 283–307 (NNDS…ISSS) and 327–415 (NNNN…TSLK). Disordered stretches follow at residues 283-310 (NNDS…STEV), 325-415 (NINN…TSLK), 440-802 (SKTP…TNSQ), 866-887 (SAST…TNTM), 908-937 (SVKL…SITD), and 990-1020 (SLNN…NQNN). Residues 440–459 (SKTPISGTKNPTTSKITPSI) are compositionally biased toward polar residues. Low complexity-rich tracts occupy residues 478–529 (SKPT…SSSV), 557–576 (SNLS…SNSQ), 588–617 (SPTS…SLKS), and 642–653 (NGNSNVNSTVLN). A compositionally biased stretch (polar residues) spans 654-665 (RSVSSLSIQHKP). Low complexity-rich tracts occupy residues 666 to 696 (TNSG…TSTT), 712 to 738 (STPT…TPST), and 752 to 802 (SSNG…TNSQ). Low complexity predominate over residues 908 to 935 (SVKLSSKSSSPIKTSSSSSSSSSSSSSI).

The protein belongs to the protein kinase superfamily. NEK Ser/Thr protein kinase family. NIMA subfamily.

It catalyses the reaction L-seryl-[protein] + ATP = O-phospho-L-seryl-[protein] + ADP + H(+). The catalysed reaction is L-threonyl-[protein] + ATP = O-phospho-L-threonyl-[protein] + ADP + H(+). This is Probable serine/threonine-protein kinase nek3 (nek3) from Dictyostelium discoideum (Social amoeba).